We begin with the raw amino-acid sequence, 125 residues long: uncharacterized protein (125 aa).

This sequence to transposase of insertion sequence IS6501.

This is an uncharacterized protein from Sinorhizobium fredii (strain NBRC 101917 / NGR234).